The sequence spans 168 residues: Ribosome maturation factor RimM (168 aa).

The PRC barrel domain occupies 92–166; it reads EDTFYKADLI…RITVDPIEGM (75 aa).

The protein belongs to the RimM family. In terms of assembly, binds ribosomal protein uS19.

Its subcellular location is the cytoplasm. In terms of biological role, an accessory protein needed during the final step in the assembly of 30S ribosomal subunit, possibly for assembly of the head region. Essential for efficient processing of 16S rRNA. May be needed both before and after RbfA during the maturation of 16S rRNA. It has affinity for free ribosomal 30S subunits but not for 70S ribosomes. This is Ribosome maturation factor RimM from Alkaliphilus metalliredigens (strain QYMF).